Here is a 256-residue protein sequence, read N- to C-terminus: 5'-nucleotidase SurE (256 aa).

Residues D13, D14, S44, and N101 each coordinate a divalent metal cation.

The protein belongs to the SurE nucleotidase family. A divalent metal cation serves as cofactor.

It is found in the cytoplasm. It carries out the reaction a ribonucleoside 5'-phosphate + H2O = a ribonucleoside + phosphate. Its function is as follows. Nucleotidase that shows phosphatase activity on nucleoside 5'-monophosphates. This chain is 5'-nucleotidase SurE, found in Porphyromonas gingivalis (strain ATCC 33277 / DSM 20709 / CIP 103683 / JCM 12257 / NCTC 11834 / 2561).